A 226-amino-acid chain; its full sequence is Ribonuclease 3 (226 aa).

The 123-residue stretch at 6 to 128 folds into the RNase III domain; the sequence is IQKLQKILGY…LIGSIFLDSN (123 aa). Mg(2+) is bound at residue Glu41. Asp45 is an active-site residue. Residues Asn114 and Glu117 each coordinate Mg(2+). Residue Glu117 is part of the active site. The DRBM domain occupies 155–225; sequence DPKTRLQEYL…AQNALIKLGI (71 aa).

Belongs to the ribonuclease III family. In terms of assembly, homodimer. Mg(2+) serves as cofactor.

It localises to the cytoplasm. It carries out the reaction Endonucleolytic cleavage to 5'-phosphomonoester.. Functionally, digests double-stranded RNA. Involved in the processing of primary rRNA transcript to yield the immediate precursors to the large and small rRNAs (23S and 16S). Processes some mRNAs, and tRNAs when they are encoded in the rRNA operon. Processes pre-crRNA and tracrRNA of type II CRISPR loci if present in the organism. This is Ribonuclease 3 from Buchnera aphidicola subsp. Baizongia pistaciae (strain Bp).